The following is a 218-amino-acid chain: C-type lectin domain family 2 member H (218 aa).

Residues 1–52 (MNAAKVETSSMGMLQRADLTAADCLQEGEMGKKIQGKCFRIISTVSPVKLYC) are Cytoplasmic-facing. A helical; Signal-anchor for type II membrane protein membrane pass occupies residues 53–73 (CYGVIMVLTVAVIALSVALSV). Residues 74 to 218 (RNKIPAMEDR…SRVGSVPRHV (145 aa)) lie on the Extracellular side of the membrane. The cysteines at positions 90 and 101 are disulfide-linked. The region spanning 97–201 (FGSKCFYFSE…SYTHRKWICS (105 aa)) is the C-type lectin domain. Residue asparagine 110 is glycosylated (N-linked (GlcNAc...) asparagine). Cysteine 118 and cysteine 200 are disulfide-bonded.

In terms of tissue distribution, detected in ileum, liver, kidney and in IL2-activated natural killer cells.

It is found in the cell membrane. Its function is as follows. Lectin-type cell surface receptor. This is C-type lectin domain family 2 member H (Clec2h) from Mus musculus (Mouse).